A 242-amino-acid polypeptide reads, in one-letter code: Octanoyltransferase (242 aa).

The 176-residue stretch at 31–206 (SQTTDEIWFL…LFLKNFGYNQ (176 aa)) folds into the BPL/LPL catalytic domain. Substrate is bound by residues 70 to 77 (RGGQVTYH), 137 to 139 (SIG), and 150 to 152 (GLA). Cys-168 serves as the catalytic Acyl-thioester intermediate.

It belongs to the LipB family.

The protein resides in the cytoplasm. The enzyme catalyses octanoyl-[ACP] + L-lysyl-[protein] = N(6)-octanoyl-L-lysyl-[protein] + holo-[ACP] + H(+). Its pathway is protein modification; protein lipoylation via endogenous pathway; protein N(6)-(lipoyl)lysine from octanoyl-[acyl-carrier-protein]: step 1/2. Functionally, catalyzes the transfer of endogenously produced octanoic acid from octanoyl-acyl-carrier-protein onto the lipoyl domains of lipoate-dependent enzymes. Lipoyl-ACP can also act as a substrate although octanoyl-ACP is likely to be the physiological substrate. This chain is Octanoyltransferase, found in Coxiella burnetii (strain CbuG_Q212) (Coxiella burnetii (strain Q212)).